The chain runs to 291 residues: NAD kinase (291 aa).

Asp-55 (proton acceptor) is an active-site residue. Residues Asp-55–Gly-56, Arg-60, Asn-130–Glu-131, Asp-160, and Thr-171–Ser-176 each bind NAD(+).

Belongs to the NAD kinase family. Requires a divalent metal cation as cofactor.

The protein localises to the cytoplasm. It carries out the reaction NAD(+) + ATP = ADP + NADP(+) + H(+). Involved in the regulation of the intracellular balance of NAD and NADP, and is a key enzyme in the biosynthesis of NADP. Catalyzes specifically the phosphorylation on 2'-hydroxyl of the adenosine moiety of NAD to yield NADP. This is NAD kinase from Corynebacterium glutamicum (strain ATCC 13032 / DSM 20300 / JCM 1318 / BCRC 11384 / CCUG 27702 / LMG 3730 / NBRC 12168 / NCIMB 10025 / NRRL B-2784 / 534).